The sequence spans 292 residues: Phosphatidylglycerol--prolipoprotein diacylglyceryl transferase (292 aa).

The next 7 helical transmembrane spans lie at 25–45 (ITLH…WWYA), 70–90 (FVVW…VLVW), 102–122 (IIAV…IIIA), 138–158 (FDII…CNFI), 193–213 (FMEG…FKAF), 217–237 (GTVS…SEVY), and 255–275 (GFTY…YLLL). Arg-153 serves as a coordination point for a 1,2-diacyl-sn-glycero-3-phospho-(1'-sn-glycerol).

Belongs to the Lgt family.

The protein localises to the cell inner membrane. The enzyme catalyses L-cysteinyl-[prolipoprotein] + a 1,2-diacyl-sn-glycero-3-phospho-(1'-sn-glycerol) = an S-1,2-diacyl-sn-glyceryl-L-cysteinyl-[prolipoprotein] + sn-glycerol 1-phosphate + H(+). It functions in the pathway protein modification; lipoprotein biosynthesis (diacylglyceryl transfer). Functionally, catalyzes the transfer of the diacylglyceryl group from phosphatidylglycerol to the sulfhydryl group of the N-terminal cysteine of a prolipoprotein, the first step in the formation of mature lipoproteins. The protein is Phosphatidylglycerol--prolipoprotein diacylglyceryl transferase of Bartonella tribocorum (strain CIP 105476 / IBS 506).